A 134-amino-acid chain; its full sequence is Cytochrome b (134 aa).

A run of 3 helical transmembrane segments spans residues 33-53 (FGSL…FLAM), 77-98 (WLLR…YLHV), and 113-133 (WNIG…GYVL). Heme b-binding residues include His-83 and His-97.

Belongs to the cytochrome b family. The cytochrome bc1 complex contains 11 subunits: 3 respiratory subunits (MT-CYB, CYC1 and UQCRFS1), 2 core proteins (UQCRC1 and UQCRC2) and 6 low-molecular weight proteins (UQCRH/QCR6, UQCRB/QCR7, UQCRQ/QCR8, UQCR10/QCR9, UQCR11/QCR10 and a cleavage product of UQCRFS1). This cytochrome bc1 complex then forms a dimer. Heme b serves as cofactor.

The protein resides in the mitochondrion inner membrane. In terms of biological role, component of the ubiquinol-cytochrome c reductase complex (complex III or cytochrome b-c1 complex) that is part of the mitochondrial respiratory chain. The b-c1 complex mediates electron transfer from ubiquinol to cytochrome c. Contributes to the generation of a proton gradient across the mitochondrial membrane that is then used for ATP synthesis. The protein is Cytochrome b (MT-CYB) of Sturnira tildae (Tilda's yellow-shouldered bat).